The chain runs to 388 residues: Dual-specificity RNA methyltransferase RlmN (388 aa).

Residue glutamate 109 is the Proton acceptor of the active site. In terms of domain architecture, Radical SAM core spans 115–354 (EDDRATLCVS…TIVRKTRGDD (240 aa)). Cysteine 122 and cysteine 359 are joined by a disulfide. Positions 129, 133, and 136 each coordinate [4Fe-4S] cluster. S-adenosyl-L-methionine-binding positions include 183 to 184 (GE), serine 215, 237 to 239 (SLH), and asparagine 316. Cysteine 359 acts as the S-methylcysteine intermediate in catalysis.

Belongs to the radical SAM superfamily. RlmN family. The cofactor is [4Fe-4S] cluster.

The protein resides in the cytoplasm. It catalyses the reaction adenosine(2503) in 23S rRNA + 2 reduced [2Fe-2S]-[ferredoxin] + 2 S-adenosyl-L-methionine = 2-methyladenosine(2503) in 23S rRNA + 5'-deoxyadenosine + L-methionine + 2 oxidized [2Fe-2S]-[ferredoxin] + S-adenosyl-L-homocysteine. It carries out the reaction adenosine(37) in tRNA + 2 reduced [2Fe-2S]-[ferredoxin] + 2 S-adenosyl-L-methionine = 2-methyladenosine(37) in tRNA + 5'-deoxyadenosine + L-methionine + 2 oxidized [2Fe-2S]-[ferredoxin] + S-adenosyl-L-homocysteine. In terms of biological role, specifically methylates position 2 of adenine 2503 in 23S rRNA and position 2 of adenine 37 in tRNAs. m2A2503 modification seems to play a crucial role in the proofreading step occurring at the peptidyl transferase center and thus would serve to optimize ribosomal fidelity. This is Dual-specificity RNA methyltransferase RlmN from Cronobacter sakazakii (strain ATCC BAA-894) (Enterobacter sakazakii).